The sequence spans 63 residues: Large ribosomal subunit protein uL29 (63 aa).

Belongs to the universal ribosomal protein uL29 family.

The protein is Large ribosomal subunit protein uL29 of Histophilus somni (strain 129Pt) (Haemophilus somnus).